We begin with the raw amino-acid sequence, 160 residues long: Small ribosomal subunit protein bS6 (160 aa).

A disordered region spans residues 100–160 (PSSVLARKSD…DDARETAGAE (61 aa)). 2 stretches are compositionally biased toward basic and acidic residues: residues 106–116 (RKSDDRGDRGN) and 136–160 (RSSE…AGAE).

Belongs to the bacterial ribosomal protein bS6 family.

In terms of biological role, binds together with bS18 to 16S ribosomal RNA. The protein is Small ribosomal subunit protein bS6 of Gluconobacter oxydans (strain 621H) (Gluconobacter suboxydans).